A 95-amino-acid chain; its full sequence is Protein TusB (95 aa).

Belongs to the DsrH/TusB family. In terms of assembly, heterohexamer, formed by a dimer of trimers. The hexameric TusBCD complex contains 2 copies each of TusB, TusC and TusD. The TusBCD complex interacts with TusE.

It is found in the cytoplasm. In terms of biological role, part of a sulfur-relay system required for 2-thiolation of 5-methylaminomethyl-2-thiouridine (mnm(5)s(2)U) at tRNA wobble positions. The protein is Protein TusB of Buchnera aphidicola subsp. Acyrthosiphon pisum (strain 5A).